We begin with the raw amino-acid sequence, 526 residues long: Maturase K (526 aa).

This sequence belongs to the intron maturase 2 family. MatK subfamily.

The protein resides in the plastid. The protein localises to the chloroplast. In terms of biological role, usually encoded in the trnK tRNA gene intron. Probably assists in splicing its own and other chloroplast group II introns. This Iris setosa (Hiougi-ayame) protein is Maturase K.